Here is a 63-residue protein sequence, read N- to C-terminus: Large ribosomal subunit protein uL30 (63 aa).

Belongs to the universal ribosomal protein uL30 family. In terms of assembly, part of the 50S ribosomal subunit.

In Stenotrophomonas maltophilia (strain K279a), this protein is Large ribosomal subunit protein uL30.